An 80-amino-acid polypeptide reads, in one-letter code: Acyl carrier protein (80 aa).

The Carrier domain occupies 4-79; the sequence is EDIFSKVKDI…DAVDFIASKA (76 aa). S39 is subject to O-(pantetheine 4'-phosphoryl)serine.

It belongs to the acyl carrier protein (ACP) family. Post-translationally, 4'-phosphopantetheine is transferred from CoA to a specific serine of apo-ACP by AcpS. This modification is essential for activity because fatty acids are bound in thioester linkage to the sulfhydryl of the prosthetic group.

Its subcellular location is the cytoplasm. Its pathway is lipid metabolism; fatty acid biosynthesis. Its function is as follows. Carrier of the growing fatty acid chain in fatty acid biosynthesis. The polypeptide is Acyl carrier protein (Synechococcus elongatus (strain ATCC 33912 / PCC 7942 / FACHB-805) (Anacystis nidulans R2)).